The sequence spans 408 residues: Serine/threonine transporter SstT (408 aa).

The next 10 helical transmembrane spans lie at 15–35 (MGLI…AVIW), 49–69 (FISA…TAAI), 85–105 (LLYV…SFVF), 142–162 (ALME…GLML), 192–212 (PLGI…GALL), 218–238 (LAVI…LIVF), 246–268 (YPLV…SSAA), 289–309 (ISIP…ISVI), 317–337 (LGIP…SIAA), and 362–382 (TEVA…QDST).

It belongs to the dicarboxylate/amino acid:cation symporter (DAACS) (TC 2.A.23) family.

The protein resides in the cell inner membrane. It catalyses the reaction L-serine(in) + Na(+)(in) = L-serine(out) + Na(+)(out). It carries out the reaction L-threonine(in) + Na(+)(in) = L-threonine(out) + Na(+)(out). Its function is as follows. Involved in the import of serine and threonine into the cell, with the concomitant import of sodium (symport system). The protein is Serine/threonine transporter SstT of Marinobacter nauticus (strain ATCC 700491 / DSM 11845 / VT8) (Marinobacter aquaeolei).